The sequence spans 622 residues: tRNA uridine 5-carboxymethylaminomethyl modification enzyme MnmG (622 aa).

Residue 10–15 coordinates FAD; it reads GGGHAG. Residue 269–283 participates in NAD(+) binding; it reads GPRYCPSVEDKIVKF.

Belongs to the MnmG family. Homodimer. Heterotetramer of two MnmE and two MnmG subunits. It depends on FAD as a cofactor.

The protein resides in the cytoplasm. Its function is as follows. NAD-binding protein involved in the addition of a carboxymethylaminomethyl (cmnm) group at the wobble position (U34) of certain tRNAs, forming tRNA-cmnm(5)s(2)U34. This chain is tRNA uridine 5-carboxymethylaminomethyl modification enzyme MnmG, found in Bartonella quintana (strain Toulouse) (Rochalimaea quintana).